A 91-amino-acid polypeptide reads, in one-letter code: Large ribosomal subunit protein uL23 (91 aa).

It belongs to the universal ribosomal protein uL23 family. Part of the 50S ribosomal subunit. Contacts protein L29, and trigger factor when it is bound to the ribosome.

Its function is as follows. One of the early assembly proteins it binds 23S rRNA. One of the proteins that surrounds the polypeptide exit tunnel on the outside of the ribosome. Forms the main docking site for trigger factor binding to the ribosome. The protein is Large ribosomal subunit protein uL23 of Staphylococcus saprophyticus subsp. saprophyticus (strain ATCC 15305 / DSM 20229 / NCIMB 8711 / NCTC 7292 / S-41).